The sequence spans 271 residues: Chymotrypsin-like elastase family member 2A (271 aa).

An N-terminal signal peptide occupies residues 1-16 (MIRTLLLSALVAGALS). Positions 17–30 (CGYPTYEVEDDVSR) are cleaved as a propeptide — activation peptide. Residues 31–269 (VVGGQEATPN…YIDWINSVMA (239 aa)) form the Peptidase S1 domain. C60 and C76 are disulfide-bonded. Residues H75 and D123 each act as charge relay system in the active site. Intrachain disulfides connect C157/C224, C188/C204, and C214/C245. S218 functions as the Charge relay system in the catalytic mechanism.

The protein belongs to the peptidase S1 family. Elastase subfamily. As to quaternary structure, interacts with CPA1. Interacts with SERPINA1. As to expression, highly expressed in pancreas (at mRNA and protein levels). Also expressed in adrenal gland and small intestine.

The protein resides in the secreted. It catalyses the reaction Preferential cleavage: Leu-|-Xaa, Met-|-Xaa and Phe-|-Xaa. Hydrolyzes elastin.. Functionally, elastase that enhances insulin signaling and might have a physiologic role in cellular glucose metabolism. Circulates in plasma and reduces platelet hyperactivation, triggers both insulin secretion and degradation, and increases insulin sensitivity. The chain is Chymotrypsin-like elastase family member 2A from Mus musculus (Mouse).